The chain runs to 113 residues: UPF0102 protein Mfla_2283 (113 aa).

It belongs to the UPF0102 family.

This is UPF0102 protein Mfla_2283 from Methylobacillus flagellatus (strain ATCC 51484 / DSM 6875 / VKM B-1610 / KT).